Reading from the N-terminus, the 535-residue chain is MGLMPDFLSLCHEFPWTFLLVVIFSFMIFKVTKTHLVNKSKKYKLPPGPKPWPIVGNLPEMLANRPATIWIHKLMKEMNTEIACIRLANTIVIPVTCPTIACEFLKKHDASFASRPKIMSTDIASDGFITTVLVPYGEQWKKMKRVLVNNLLSPQKHQWLLGKRNEEADNLMFYIYNKCCKDVNDGPGLVNIRIAAQHYGGNVFRKLIFNSRYFGKVMEDGGPGFEEVEHINATFTILKYVYAFSISDFVPFLRRLDLDGHRSKIMKAMRIMRKYHDPIIDDRIKQWNDGLKTVEEDLLDVLIKLKDANNKPLLTLKELKAQIIELAIEMVDNPSNAFEWALAEMINQPELLKRATEELDNVVGKERLVQESDIPKLQFVKACAREALRLHPMEYFNVPHLCMNDTMVGDYLFPKGTQVLLSRVALGRNPKFWTDPLKFNPERHLKEGIDVVLTEPDLRFISFTTGRRSCPGVALGTTMTVMLFARMLHGFSWSPPPDVSSIDLVPSKDDLFLAKPLLLVAKPRLAAELYRTNEI.

The Cytoplasmic portion of the chain corresponds to 1 to 8 (MGLMPDFL). Residues 9 to 29 (SLCHEFPWTFLLVVIFSFMIF) form a helical; Signal-anchor for type II membrane protein membrane-spanning segment. Topologically, residues 30–535 (KVTKTHLVNK…AAELYRTNEI (506 aa)) are lumenal. N38, N232, and N404 each carry an N-linked (GlcNAc...) asparagine glycan. C470 contacts heme.

This sequence belongs to the cytochrome P450 family. Heme is required as a cofactor. As to expression, exclusively expressed in aerial parts. Highest expression in the apical leaves. Also detected in the second leaf from the top and in the stem. Not expressed in older leaves or roots.

Its subcellular location is the microsome membrane. The enzyme catalyses L-isoleucine + 2 reduced [NADPH--hemoprotein reductase] + 2 O2 = (1E,2S)-2-methylbutanal oxime + 2 oxidized [NADPH--hemoprotein reductase] + CO2 + 3 H2O + 2 H(+). It carries out the reaction L-isoleucine + reduced [NADPH--hemoprotein reductase] + O2 = N-hydroxy-L-isoleucine + oxidized [NADPH--hemoprotein reductase] + H2O + 2 H(+). The catalysed reaction is N-hydroxy-L-isoleucine + reduced [NADPH--hemoprotein reductase] + O2 = N,N-dihydroxy-L-isoleucine + oxidized [NADPH--hemoprotein reductase] + H2O + H(+). It catalyses the reaction L-valine + 2 reduced [NADPH--hemoprotein reductase] + 2 O2 = (E)-2-methylpropanal oxime + 2 oxidized [NADPH--hemoprotein reductase] + CO2 + 3 H2O + 2 H(+). The enzyme catalyses L-valine + reduced [NADPH--hemoprotein reductase] + O2 = N-hydroxy-L-valine + oxidized [NADPH--hemoprotein reductase] + H2O + 2 H(+). It carries out the reaction N-hydroxy-L-valine + reduced [NADPH--hemoprotein reductase] + O2 = N,N-dihydroxy-L-valine + oxidized [NADPH--hemoprotein reductase] + H2O + H(+). Its pathway is secondary metabolite biosynthesis. In terms of biological role, involved in the biosynthesis of the cyanogenic glucosides linamarin and lotaustralin and of the nitirle glucosides rhodiocyanoside A and D. Can use L-isoleucine &gt; L-valine as substrate, but not L-leucine, L-phenylalanine or L-tyrosine. Catalyzes multi-step reactions starting with two successive N-hydroxylations using L-isoleucine and, to a lower extent, L-valine as substrates leading to the formation of N,N-dihydroxy-L-valine and N,N-dihydroxy-L-isoleucine, respectively; following spontaneous reactions lead to the production of (E)-2-methylpropanal oxime and (1E,2S)-2-methylbutanal oxime, respectively. This chain is Isoleucine N-monooxygenase 1, found in Lotus japonicus (Lotus corniculatus var. japonicus).